A 332-amino-acid polypeptide reads, in one-letter code: ADP-L-glycero-D-manno-heptose-6-epimerase (332 aa).

NADP(+) contacts are provided by residues 11 to 12, 32 to 33, lysine 39, lysine 54, 76 to 80, and asparagine 93; these read FI, DN, and EGACS. Residue tyrosine 140 is the Proton acceptor of the active site. Position 144 (lysine 144) interacts with NADP(+). Residue asparagine 170 coordinates substrate. NADP(+)-binding residues include valine 171 and lysine 179. The active-site Proton acceptor is lysine 179. Substrate is bound by residues arginine 181, histidine 188, 202–205, arginine 215, and tyrosine 294; that span reads FEGS.

The protein belongs to the NAD(P)-dependent epimerase/dehydratase family. HldD subfamily. As to quaternary structure, homopentamer. Requires NADP(+) as cofactor.

It carries out the reaction ADP-D-glycero-beta-D-manno-heptose = ADP-L-glycero-beta-D-manno-heptose. It participates in nucleotide-sugar biosynthesis; ADP-L-glycero-beta-D-manno-heptose biosynthesis; ADP-L-glycero-beta-D-manno-heptose from D-glycero-beta-D-manno-heptose 7-phosphate: step 4/4. Catalyzes the interconversion between ADP-D-glycero-beta-D-manno-heptose and ADP-L-glycero-beta-D-manno-heptose via an epimerization at carbon 6 of the heptose. This is ADP-L-glycero-D-manno-heptose-6-epimerase from Dechloromonas aromatica (strain RCB).